Consider the following 380-residue polypeptide: GATOR1 complex protein NPRL2 (380 aa).

Positions 1-133 (MGSGCRIECI…SKQKLVPIMT (133 aa)) are interaction with PDPK1. Arginine 78 provides a ligand contact to GDP. Arginine 78 is subject to Asymmetric dimethylarginine. Glycyl lysine isopeptide (Lys-Gly) (interchain with G-Cter in ubiquitin) cross-links involve residues lysine 158 and lysine 357.

It belongs to the NPR2 family. In terms of assembly, within the GATOR complex, component of the GATOR1 subcomplex, made of DEPDC5, NPRL2 and NPRL3. GATOR1 mediates the strong interaction of the GATOR complex with small GTPases Rag (RagA/RRAGA, RagB/RRAGB, RagC/RRAGC and/or RagD/RRAGD) heterodimers. GATOR1 interacts with GPR155/LYCHOS; interaction takes place in presence of cholesterol and prevents interaction between GATOR1 and KICSTOR. Interacts with PDPK1. Post-translationally, in the presence of abundant amino acids, ubiquitinated at Lys-158 and Lys-357 via 'Lys-6'-linked ubiquitination by the WDR24 component of the GATOR2 complex, thereby inhibiting the GATOR1 complex and promoting mTORC1 activation. Asymmetric dimethylation at Arg-78 by PRMT1 inhibits the GTPase activator activity of the GATOR1 complex and consequently inducing timely mTORC1 activation under methionine-sufficient conditions. As to expression, most abundant in skeletal muscle, followed by brain, liver and pancreas, with lower amounts in lung, kidney, placenta and heart. Expressed in the frontal lobe cortex as well as in the temporal, parietal, and occipital lobes. Expressed in most lung cancer cell lines tested.

It is found in the lysosome membrane. Catalytic component of the GATOR1 complex, a multiprotein complex that functions as an inhibitor of the amino acid-sensing branch of the mTORC1 pathway. In response to amino acid depletion, the GATOR1 complex has GTPase activating protein (GAP) activity and strongly increases GTP hydrolysis by RagA/RRAGA (or RagB/RRAGB) within heterodimeric Rag complexes, thereby turning them into their inactive GDP-bound form, releasing mTORC1 from lysosomal surface and inhibiting mTORC1 signaling. In the presence of abundant amino acids, the GATOR1 complex is ubiquitinated and inhibited by GATOR2. Within the GATOR1 complex, NPRL2 constitutes the catalytic subunit that mediates the GTPase activator activity and under methionine-sufficient conditions, the GTPase activator activity is inhibited by PRMT1 through methylation and consequently inducing timely mTORC1 activation. Functionally, suppresses Src-dependent tyrosine phosphorylation and activation of PDPK1 and its downstream signaling. Down-regulates PDPK1 kinase activity by interfering with tyrosine phosphorylation at 'Tyr-9', 'Tyr-373' and 'Tyr-376' residues. May act as a tumor suppressor. Suppresses cell growth and enhances sensitivity to various anticancer drugs. This Homo sapiens (Human) protein is GATOR1 complex protein NPRL2.